Reading from the N-terminus, the 178-residue chain is C-phycoerythrin class 2 subunit beta (178 aa).

Positions 50 and 61 each coordinate phycourobilin. 2 residues coordinate (2R,3E)-phycoerythrobilin: cysteine 82 and cysteine 159.

It belongs to the phycobiliprotein family. As to quaternary structure, heterodimer of an alpha and a beta chain. Post-translationally, contains two covalently linked phycoerythrobilin chromophores and one covalently linked phycourobilin chromophore.

The protein localises to the cellular thylakoid membrane. Its function is as follows. Light-harvesting photosynthetic bile pigment-protein from the phycobiliprotein complex. In Synechococcus sp. (strain WH8103), this protein is C-phycoerythrin class 2 subunit beta (mpeB).